Reading from the N-terminus, the 348-residue chain is Selenide, water dikinase (348 aa).

C17 is a catalytic residue. Residues K20 and 48 to 50 (TSD) each bind ATP. D51 is a Mg(2+) binding site. ATP is bound by residues D68, D91, and 139 to 141 (GHT). D91 serves as a coordination point for Mg(2+). D227 contacts Mg(2+).

Belongs to the selenophosphate synthase 1 family. Class I subfamily. As to quaternary structure, homodimer. The cofactor is Mg(2+).

It carries out the reaction hydrogenselenide + ATP + H2O = selenophosphate + AMP + phosphate + 2 H(+). Functionally, synthesizes selenophosphate from selenide and ATP. This is Selenide, water dikinase from Dechloromonas aromatica (strain RCB).